Here is a 72-residue protein sequence, read N- to C-terminus: MSFEQAMKELETVVGQLERGDVALDQSIALYERGAALKKRCEDELKRAEEKVAAITLDSNGQPTGTKPVEGL.

The protein belongs to the XseB family. As to quaternary structure, heterooligomer composed of large and small subunits.

It localises to the cytoplasm. The enzyme catalyses Exonucleolytic cleavage in either 5'- to 3'- or 3'- to 5'-direction to yield nucleoside 5'-phosphates.. Its function is as follows. Bidirectionally degrades single-stranded DNA into large acid-insoluble oligonucleotides, which are then degraded further into small acid-soluble oligonucleotides. This chain is Exodeoxyribonuclease 7 small subunit, found in Ruegeria pomeroyi (strain ATCC 700808 / DSM 15171 / DSS-3) (Silicibacter pomeroyi).